A 555-amino-acid polypeptide reads, in one-letter code: Probable metabolite transport protein YDR387C (555 aa).

Residues 1–39 lie on the Cytoplasmic side of the membrane; that stretch reads MSTDESEDVYSDLYSIISQVTSNTANDIEQLPYALTFKT. The chain crosses the membrane as a helical span at residues 40–60; sequence SLIFVGATIGGLLFGYDTGVI. Residues 61-83 lie on the Extracellular side of the membrane; sequence SGVLLSLKPEDLSLVVLTDVQKE. Residues 84 to 104 form a helical membrane-spanning segment; it reads LITSSTSVGSFFGSILAFPLA. Over 105–118 the chain is Cytoplasmic; it reads DRYGRRITLAICCS. The helical transmembrane segment at 119–139 threads the bilayer; that stretch reads IFILAAIGMAIARTLTFLICG. Position 140 (R140) is a topological domain, extracellular. Residues 141–161 traverse the membrane as a helical segment; sequence LLVGIAVGVSAQCVPLFLSEI. The Cytoplasmic segment spans residues 162 to 168; sequence SPSRIRG. A helical membrane pass occupies residues 169–189; it reads FMLTLNIIAITGGQLVSYVIA. Residues 190–200 lie on the Extracellular side of the membrane; the sequence is SLMKEIDNSWR. The helical transmembrane segment at 201–221 threads the bilayer; the sequence is YLFALSAIPAILFLSILDFIP. Residues 222–356 are Cytoplasmic-facing; sequence ESPRWSISKG…TIRALIVGCM (135 aa). Residues 289 to 313 are disordered; that stretch reads SSTSGTLSPPNIKRLSSNTERTSNT. The helical transmembrane segment at 357–377 threads the bilayer; that stretch reads LMFFQQITGFNAFMYYAAIIF. At 378 to 384 the chain is on the extracellular side; that stretch reads SKFNIKN. A helical transmembrane segment spans residues 385-405; sequence PLLPPILIASTNFIFTFFAMY. At 406 to 413 the chain is on the cytoplasmic side; it reads TMDSLGRR. A helical transmembrane segment spans residues 414–434; it reads AILLRTILIMTVGLLLCSVGF. The Extracellular segment spans residues 435–440; that stretch reads GHDQVN. A helical transmembrane segment spans residues 441–461; that stretch reads LLLISVVIYVAAYASAMGSVP. Topologically, residues 462 to 474 are cytoplasmic; sequence WTCVEFLPLNRRS. Residues 475 to 497 form a helical membrane-spanning segment; sequence FGASCIACTNWLTNAFVSMTYLS. At 498-506 the chain is on the extracellular side; that stretch reads TINTIGDEN. The helical transmembrane segment at 507 to 527 threads the bilayer; that stretch reads TMLIFAFFTVCAWFFVYFWYP. Over 528 to 555 the chain is Cytoplasmic; that stretch reads EVKGLSLEEVGRVFDNGIDVHYVFRTYH.

The protein belongs to the major facilitator superfamily. Sugar transporter (TC 2.A.1.1) family.

The protein resides in the membrane. This chain is Probable metabolite transport protein YDR387C, found in Saccharomyces cerevisiae (strain ATCC 204508 / S288c) (Baker's yeast).